A 731-amino-acid chain; its full sequence is Nucleolar GTP-binding protein 2 (731 aa).

N-acetylmethionine is present on methionine 1. The interval 1–33 (MVKPKYKGRSTINPSKASTNPDRVQGAGGQNMR) is disordered. Residues 10–22 (STINPSKASTNPD) are compositionally biased toward polar residues. The 162-residue stretch at 207–368 (WGELYKVIDS…LIDCPGVVYP (162 aa)) folds into the CP-type G domain. Residues 317–324 (GYPNVGKS) and 361–365 (DCPGV) each bind GTP. The segment at 481-502 (VVPEAAQNNPGEEVTETAGEGS) is disordered. Position 504 is a phosphoserine (serine 504). Residues 555 to 589 (LEEELESFSDEEEEEQEQQRDDAEESSSEPEEENV) are compositionally biased toward acidic residues. 2 disordered regions span residues 555–594 (LEEE…NDTK) and 630–731 (EKIF…RQKQ). Basic and acidic residues-rich tracts occupy residues 630–652 (EKIF…DRAP) and 662–671 (QREEEQEHSN). 2 stretches are compositionally biased toward basic residues: residues 681–695 (ERRR…KKVG) and 721–731 (KHKRKKFRQKQ).

This sequence belongs to the TRAFAC class YlqF/YawG GTPase family. NOG2 subfamily. Interacts with LYAR and RPL23A. Interacts with the nuclear importin-beta receptor and, at a lower extent, with importin-alpha. In terms of tissue distribution, widely expressed, with the highest expression level in testis.

It is found in the nucleus. The protein resides in the nucleolus. In terms of biological role, GTPase that associates with pre-60S ribosomal subunits in the nucleolus and is required for their nuclear export and maturation. May promote cell proliferation possibly by increasing p53/TP53 protein levels, and consequently those of its downstream product CDKN1A/p21, and decreasing RPL23A protein levels. The protein is Nucleolar GTP-binding protein 2 (GNL2) of Homo sapiens (Human).